The sequence spans 679 residues: MSKNLLIELGLEELPAYVVTPSEKQLGERLATFLTENRLSFEDIQTFSTPRRLAVRVSGLADQQTDLTEDFKGPAKKIALDADGNFSKAAQGFVRGKGLTTDAIEFREVKGEEYVYVTKHEAGKPAKEVLLGVTEVLSAMTFPVSMHWANNSFEYIRPVHTLTVLLNDEALELDFLDIHSGRVSRGHRFLGTETTITSADSYEADLRSQFVIADAKERQEMIVEQIKTLEVEQGVQVDIDEDLLNEVLNLVEFPTAFMGSFEAKYLDVPEEVLVTSMKNHQRYFVVRDQAGHLMPNFVSVRNGNDQAIENVIKGNEKVLVARLEDGEFFWREDQKLQIADLVAKLTNVTFHEKIGSLAEHMDRTRVIAASLAKEANLSAEEVTAVDRAAQIYKFDLLTGMVGEFDELQGIMGEKYALLAGEDAAVATAIREHYLPDAAGGALPETKVGAVLALAAKLDTLLSFFSVGLIPSGSNDPYALRRATQGIVRILDHFGWRIPMDKLVDSLYDLSFDSLTYANKADVMNFIRARVDKMMGKAAPKDIREAILASSTFVVPEMLAAAEALVKASHTENYKPAVESLSRAFNLAEKADASVQVDPSLFENEQENTLFAAIQGLTLAGSAAQQLEQVFALSPVINDFFDNTMVMAGDQALKNNRLAILSDLVSKAKTIVAFNQLNTK.

It belongs to the class-II aminoacyl-tRNA synthetase family. Tetramer of two alpha and two beta subunits.

Its subcellular location is the cytoplasm. The enzyme catalyses tRNA(Gly) + glycine + ATP = glycyl-tRNA(Gly) + AMP + diphosphate. This chain is Glycine--tRNA ligase beta subunit, found in Streptococcus pyogenes serotype M1.